The following is a 178-amino-acid chain: Translation initiation factor IF-3 (178 aa).

Residues 1–20 are disordered; it reads MRRPFKTDAPVKDGPRSNRE.

The protein belongs to the IF-3 family. As to quaternary structure, monomer.

The protein resides in the cytoplasm. Its function is as follows. IF-3 binds to the 30S ribosomal subunit and shifts the equilibrium between 70S ribosomes and their 50S and 30S subunits in favor of the free subunits, thus enhancing the availability of 30S subunits on which protein synthesis initiation begins. The polypeptide is Translation initiation factor IF-3 (Rhizobium leguminosarum bv. trifolii (strain WSM2304)).